Reading from the N-terminus, the 257-residue chain is MFILSYHLANLIFFIIFMTSAKENILRHLAIIMDGNGRWAKSRLKPRIFGHRNSVSSVDATIEYCVENNIEMLTLFAFGRDNWLRPAQEVSDLMDLFYKTLKDKTPKLHDNNIVVTVVGDRSRLSNKLIGMIEYSESLTKSNTGLKLRLAVDYAGRWDIVEATRAIAREVDIGKLSVDEIDQNSFAKYLVGGNMPVDLLIRTSGEVRLSDFMLWQLAYAEMYFTDIMWPDFSKQELTRAVEYFYSRQRRFGKSGEQI.

The active site involves aspartate 34. Aspartate 34 contributes to the Mg(2+) binding site. Residues 35–38 (GNGR), tryptophan 39, arginine 47, and histidine 51 contribute to the substrate site. The active-site Proton acceptor is asparagine 82. Substrate-binding positions include tryptophan 83, arginine 85, arginine 201, and 207-209 (RLS). Glutamate 220 is a binding site for Mg(2+).

This sequence belongs to the UPP synthase family. As to quaternary structure, homodimer. It depends on Mg(2+) as a cofactor.

The enzyme catalyses 8 isopentenyl diphosphate + (2E,6E)-farnesyl diphosphate = di-trans,octa-cis-undecaprenyl diphosphate + 8 diphosphate. In terms of biological role, catalyzes the sequential condensation of isopentenyl diphosphate (IPP) with (2E,6E)-farnesyl diphosphate (E,E-FPP) to yield (2Z,6Z,10Z,14Z,18Z,22Z,26Z,30Z,34E,38E)-undecaprenyl diphosphate (di-trans,octa-cis-UPP). UPP is the precursor of glycosyl carrier lipid in the biosynthesis of bacterial cell wall polysaccharide components such as peptidoglycan and lipopolysaccharide. This Francisella tularensis subsp. tularensis (strain SCHU S4 / Schu 4) protein is Ditrans,polycis-undecaprenyl-diphosphate synthase ((2E,6E)-farnesyl-diphosphate specific).